A 373-amino-acid polypeptide reads, in one-letter code: Indole glucosinolate O-methyltransferase 4 (373 aa).

5 residues coordinate S-adenosyl-L-homocysteine: Gly217, Asp240, Asp260, Met261, and Lys274. The active-site Proton acceptor is the His278.

It belongs to the class I-like SAM-binding methyltransferase superfamily. Cation-independent O-methyltransferase family. Interacts with B'GAMMA.

Its pathway is secondary metabolite biosynthesis. Functionally, involved in indole glucosinolate biosynthesis. Catalyzes methoxylation reactions of the glucosinolate indole ring. Converts the hydroxy intermediates 4-hydroxy-indol-3-yl-methylglucosinolate (4OH-I3M) and 1-hydroxy-indol-3-yl-methylglucosinolate (1OH-I3M) to 4-methoxy-indol-3-yl-methylglucosinolate (4MO-I3M) and 1-methoxy-indol-3-yl-methylglucosinolate(1MO-I3M), respectively. In Arabidopsis thaliana (Mouse-ear cress), this protein is Indole glucosinolate O-methyltransferase 4.